We begin with the raw amino-acid sequence, 135 residues long: Small ribosomal subunit protein bS16m/bS16c (135 aa).

The transit peptide at 1-7 (MVVRIRL) directs the protein to the chloroplast and mitochondrion. A disordered region spans residues 87–135 (PMVAMGRKGGARDTRPVDPMTGRYVDAENKTVNANDNQPKEEDTEAKSA). A compositionally biased stretch (basic and acidic residues) spans 124–135 (QPKEEDTEAKSA).

It belongs to the bacterial ribosomal protein bS16 family. As to quaternary structure, component of the mitochondrial ribosome small subunit. In terms of tissue distribution, expressed at low levels in flowers, and, to a lower extent, in leaves, stems and roots.

The protein localises to the mitochondrion. It localises to the plastid. The protein resides in the chloroplast. This is Small ribosomal subunit protein bS16m/bS16c from Arabidopsis thaliana (Mouse-ear cress).